Reading from the N-terminus, the 271-residue chain is Mediator of RNA polymerase II transcription subunit 18 (271 aa).

The disordered stretch occupies residues 89–119 (FGGNPSSSGDPDVSMSGLEEKPSSSSSSYSY).

It belongs to the Mediator complex subunit 18 family. As to quaternary structure, component of the Mediator complex.

It is found in the nucleus. Component of the Mediator complex, a coactivator involved in the regulated transcription of nearly all RNA polymerase II-dependent genes. Mediator functions as a bridge to convey information from gene-specific regulatory proteins to the basal RNA polymerase II transcription machinery. Mediator is recruited to promoters by direct interactions with regulatory proteins and serves as a scaffold for the assembly of a functional preinitiation complex with RNA polymerase II and the general transcription factors. The polypeptide is Mediator of RNA polymerase II transcription subunit 18 (srb5) (Aspergillus niger (strain ATCC MYA-4892 / CBS 513.88 / FGSC A1513)).